Here is a 208-residue protein sequence, read N- to C-terminus: MSLHIADHPLVKHKLGLMRQNDISTKDFRALASEIARLLTYEAVKDLPTEKHIVDGWAGPVEVDRLKGKKITIVPILRAGLGMMDGVIDLIPSAKVTVVGFYRDEETLEPVEYYVKTASEMSERVALIIDPMLATGGTLIATIDTLKKAGSKKIKGLFLVAAPEGIKKVQDAHPDVEIYVAAVDERLNEAGYILPGLGDAGDKIFGTR.

5-phospho-alpha-D-ribose 1-diphosphate-binding positions include Arg78, Arg103, and Asp130 to Thr138. Uracil is bound by residues Ile193 and Gly198–Ala200. 5-phospho-alpha-D-ribose 1-diphosphate is bound at residue Asp199.

This sequence belongs to the UPRTase family. The cofactor is Mg(2+).

It catalyses the reaction UMP + diphosphate = 5-phospho-alpha-D-ribose 1-diphosphate + uracil. The protein operates within pyrimidine metabolism; UMP biosynthesis via salvage pathway; UMP from uracil: step 1/1. Its activity is regulated as follows. Allosterically activated by GTP. Functionally, catalyzes the conversion of uracil and 5-phospho-alpha-D-ribose 1-diphosphate (PRPP) to UMP and diphosphate. The chain is Uracil phosphoribosyltransferase from Desulfotalea psychrophila (strain LSv54 / DSM 12343).